Consider the following 21-residue polypeptide: MLISGTAFLRLRTNRKAFPTP.

Involved in erythromycin resistance. In Corynebacterium diphtheriae, this protein is 23S rRNA methylase leader peptide.